Here is a 92-residue protein sequence, read N- to C-terminus: C-C motif chemokine 22 (92 aa).

The first 24 residues, 1-24 (MATLRVPLLVALVLLAVAIQTSDA), serve as a signal peptide directing secretion. Disulfide bonds link Cys36/Cys60 and Cys37/Cys76.

The protein belongs to the intercrine beta (chemokine CC) family. As to expression, expressed by activated splenic B-lymphocytes and dendritic cells. Low expression in lung, thymocytes, lymph node, and unstimulated splenic cells.

The protein resides in the secreted. Its function is as follows. Chemotactic for activated T-lymphocytes. May play an important role in the collaboration of dendritic cells and B-lymphocytes with T-cells in immune responses. This chain is C-C motif chemokine 22 (Ccl22), found in Mus musculus (Mouse).